Consider the following 259-residue polypeptide: MAPAEARGALPGWISVLGWGLALCSLCGAGPLWSGSHEWKKLILTQHWPPTVCKEVNSCQDSLDYWTIHGLWPDRAEDCNQSWHFNLDEIKDLLRDMKIYWPDVIHRSSNRSQFWKHEWVKHGTCAAQVDALNSEKKYFGKSLDLYKQIDLNSVLQKFGIKPSINYYQLADFKDALTRIYGVVPKIQCLMPEQGESVQTVGQIELCFTKEDLHLRNCTEPGEQLSSRQEAWLAMEASTHGMMVCEDGPIFYPPPTKTQH.

Positions 1–29 are cleaved as a signal peptide; sequence MAPAEARGALPGWISVLGWGLALCSLCGA. Cys-53 and Cys-59 are joined by a disulfide. His-69 is an active-site residue. 3 disulfide bridges follow: Cys-79-Cys-125, Cys-188-Cys-244, and Cys-206-Cys-217. Asn-80 and Asn-110 each carry an N-linked (GlcNAc...) asparagine glycan. Active-site residues include Glu-118 and His-122. N-linked (GlcNAc...) asparagine glycosylation is present at Asn-216.

This sequence belongs to the RNase T2 family.

It is found in the secreted. Its subcellular location is the lysosome lumen. It localises to the endoplasmic reticulum lumen. The protein localises to the mitochondrion intermembrane space. The catalysed reaction is a ribonucleotidyl-ribonucleotide-RNA + H2O = a 3'-end 3'-phospho-ribonucleotide-RNA + a 5'-end dephospho-ribonucleoside-RNA + H(+). It catalyses the reaction an adenylyl-uridine-RNA = a 3'-end 2',3'-cyclophospho-AMP-RNA + a 5'-end dephospho-uridine-RNA. The enzyme catalyses a guanylyl-uridine-RNA = a 3'-end 2',3'-cyclophospho-GMP-RNA + a 5'-end dephospho-uridine-RNA. Inhibited by Zn(2+) and Cu(2+). Ribonuclease that plays an essential role in innate immune response by recognizing and degrading RNAs from microbial pathogens that are subsequently sensed by TLR8. Cleaves preferentially single-stranded RNA molecules between purine and uridine residues, which critically contributes to the supply of catabolic uridine and the generation of purine-2',3'-cyclophosphate-terminated oligoribonucleotides. In turn, RNase T2 degradation products promote the RNA-dependent activation of TLR8. In plasmacytoid dendritic cells, it cooperates with PLD3 or PLD4 5'-&gt;3' exonucleases to process RNA fragments and release 2',3'-cyclic guanosine monophosphate (2',3'-cGMP), a potent stimulatory ligand for TLR7. Also plays a key role in degradation of mitochondrial RNA and processing of non-coding RNA imported from the cytosol into mitochondria. Participates as well in degradation of mitochondrion-associated cytosolic rRNAs. The polypeptide is Ribonuclease T2-B (Mus musculus (Mouse)).